We begin with the raw amino-acid sequence, 144 residues long: Grifin (144 aa).

Residues 5–133 enclose the Galectin domain; that stretch reads FEAFCAGGLA…EHRLAQVELA (129 aa). The residue at position 138 (Ser-138) is a Phosphoserine.

Homodimer.

This Mus musculus (Mouse) protein is Grifin (Grifin).